We begin with the raw amino-acid sequence, 575 residues long: Beta-amylase (575 aa).

Residues methionine 1–alanine 36 form the signal peptide. Aspartate 77 serves as a coordination point for substrate. Glutamate 84 and aspartate 88 together coordinate Ca(2+). 2 residues coordinate substrate: histidine 117 and aspartate 125. A disulfide bridge links cysteine 119 with cysteine 127. Glutamate 171 provides a ligand contact to Ca(2+). Glutamate 199 (proton donor) is an active-site residue. Substrate is bound by residues lysine 315, histidine 320, and threonine 358. The active-site Proton acceptor is glutamate 395. Substrate contacts are provided by residues asparagine 396 to alanine 397 and arginine 424.

This sequence belongs to the glycosyl hydrolase 14 family. Monomer. Ca(2+) serves as cofactor.

The enzyme catalyses Hydrolysis of (1-&gt;4)-alpha-D-glucosidic linkages in polysaccharides so as to remove successive maltose units from the non-reducing ends of the chains.. The chain is Beta-amylase from Niallia circulans (Bacillus circulans).